The chain runs to 196 residues: Imidazole glycerol phosphate synthase subunit HisH (196 aa).

The Glutamine amidotransferase type-1 domain maps to 2–196; that stretch reads NVVIVDTECA…LKRFLELTLC (195 aa). Cys77 serves as the catalytic Nucleophile. Residues His175 and Glu177 contribute to the active site.

In terms of assembly, heterodimer of HisH and HisF.

Its subcellular location is the cytoplasm. It carries out the reaction 5-[(5-phospho-1-deoxy-D-ribulos-1-ylimino)methylamino]-1-(5-phospho-beta-D-ribosyl)imidazole-4-carboxamide + L-glutamine = D-erythro-1-(imidazol-4-yl)glycerol 3-phosphate + 5-amino-1-(5-phospho-beta-D-ribosyl)imidazole-4-carboxamide + L-glutamate + H(+). It catalyses the reaction L-glutamine + H2O = L-glutamate + NH4(+). It participates in amino-acid biosynthesis; L-histidine biosynthesis; L-histidine from 5-phospho-alpha-D-ribose 1-diphosphate: step 5/9. Functionally, IGPS catalyzes the conversion of PRFAR and glutamine to IGP, AICAR and glutamate. The HisH subunit catalyzes the hydrolysis of glutamine to glutamate and ammonia as part of the synthesis of IGP and AICAR. The resulting ammonia molecule is channeled to the active site of HisF. The sequence is that of Imidazole glycerol phosphate synthase subunit HisH from Idiomarina loihiensis (strain ATCC BAA-735 / DSM 15497 / L2-TR).